Reading from the N-terminus, the 208-residue chain is AN1-type zinc finger protein 6 (208 aa).

An A20-type zinc finger spans residues 8-42; that stretch reads SQVPMLCSTGCGFYGNPRTNGMCSVCYKEHLQRQN. Zn(2+) is bound by residues Cys14, Cys18, Cys30, and Cys33. The tract at residues 41-110 is disordered; that stretch reads QNSSNGRISP…ASSQVDSTSV (70 aa). Ser49 is modified (phosphoserine). Polar residues predominate over residues 54 to 68; it reads SVTSLSESLPVQCTD. A compositionally biased stretch (low complexity) spans 83–94; it reads SSVQPSPVSNQS. Residues 95-110 are compositionally biased toward polar residues; sequence LLSESVASSQVDSTSV. The segment at 143–189 adopts an AN1-type zinc-finger fold; sequence KQKKNRCFMCRKKVGLTGFECRCGNVYCGVHRYSDVHNCSYNYKADA. Zn(2+)-binding residues include Cys149, Cys152, Cys163, Cys165, Cys170, His173, His179, and Cys181. An N6-acetyllysine modification is found at Lys204.

In terms of assembly, interacts with PKN1.

The polypeptide is AN1-type zinc finger protein 6 (ZFAND6) (Bos taurus (Bovine)).